Consider the following 273-residue polypeptide: Probable membrane transporter protein YunE (273 aa).

8 helical membrane-spanning segments follow: residues 3 to 23 (FVIL…IGLG), 50 to 70 (AIGT…LAYI), 81 to 101 (LIFF…SKLF), 105 to 125 (SFSV…MLKA), 157 to 177 (VGIA…IGGG), 185 to 205 (MLLF…IIFL), 222 to 242 (WLYA…GAAI), and 251 to 271 (IVMI…YEGI).

The protein belongs to the 4-toluene sulfonate uptake permease (TSUP) (TC 2.A.102) family.

The protein resides in the cell membrane. The polypeptide is Probable membrane transporter protein YunE (yunE) (Bacillus subtilis (strain 168)).